The primary structure comprises 431 residues: Chaperone SurA (431 aa).

The signal sequence occupies residues 1–22 (MKLWKPTLISVLSALTLFNAHA). 2 PpiC domains span residues 173 to 271 (TVQY…KIDD) and 280 to 380 (VTEV…EVLD).

It localises to the periplasm. The catalysed reaction is [protein]-peptidylproline (omega=180) = [protein]-peptidylproline (omega=0). Functionally, chaperone involved in the correct folding and assembly of outer membrane proteins. Recognizes specific patterns of aromatic residues and the orientation of their side chains, which are found more frequently in integral outer membrane proteins. May act in both early periplasmic and late outer membrane-associated steps of protein maturation. The sequence is that of Chaperone SurA from Vibrio cholerae serotype O1 (strain ATCC 39315 / El Tor Inaba N16961).